The sequence spans 289 residues: Syntaxin-2 (289 aa).

Topologically, residues 1–265 are cytoplasmic; that stretch reads MRDRLPDLTA…KYQSKARRKK (265 aa). Residues 68–101 adopt a coiled-coil conformation; the sequence is EGKIKEELEDLDKEIKKTANRIRGKLKSIEQSCD. The t-SNARE coiled-coil homology domain maps to 192–254; sequence LNEIESRHKD…EHAKEETKKA (63 aa). The chain crosses the membrane as a helical; Anchor for type IV membrane protein span at residues 266–289; that stretch reads WIIAAVAVAVIAVLALIIGLSVGK.

Belongs to the syntaxin family. In terms of assembly, interacts with SYT6 and SYT8; the interaction is Ca(2+)-dependent.

The protein resides in the membrane. Essential for epithelial morphogenesis. May mediate Ca(2+)-regulation of exocytosis acrosomal reaction in sperm. In Mus musculus (Mouse), this protein is Syntaxin-2 (Stx2).